The primary structure comprises 223 residues: Protein-lysine N-methyltransferase CG9154 (223 aa).

The protein belongs to the class I-like SAM-binding methyltransferase superfamily. EFM5 family.

It localises to the cytoplasm. In terms of biological role, S-adenosyl-L-methionine-dependent protein-lysine N-methyltransferase that methylates elongation factor 1-alpha. The sequence is that of Protein-lysine N-methyltransferase CG9154 from Drosophila melanogaster (Fruit fly).